The chain runs to 433 residues: 23S rRNA (uracil(1939)-C(5))-methyltransferase RlmD (433 aa).

A TRAM domain is found at 1–53 (MPVAVIESLDHEGRGVAHVDGKVVFVEGALAGEQVEYTVYRQRPSYDLAEATR). [4Fe-4S] cluster contacts are provided by cysteine 66, cysteine 72, cysteine 75, and cysteine 154. Residues glutamine 263, phenylalanine 292, asparagine 297, glutamate 313, asparagine 341, and aspartate 362 each coordinate S-adenosyl-L-methionine. Cysteine 389 (nucleophile) is an active-site residue.

It belongs to the class I-like SAM-binding methyltransferase superfamily. RNA M5U methyltransferase family. RlmD subfamily.

The enzyme catalyses uridine(1939) in 23S rRNA + S-adenosyl-L-methionine = 5-methyluridine(1939) in 23S rRNA + S-adenosyl-L-homocysteine + H(+). Functionally, catalyzes the formation of 5-methyl-uridine at position 1939 (m5U1939) in 23S rRNA. The protein is 23S rRNA (uracil(1939)-C(5))-methyltransferase RlmD of Aromatoleum aromaticum (strain DSM 19018 / LMG 30748 / EbN1) (Azoarcus sp. (strain EbN1)).